The chain runs to 262 residues: Dihydroorotate dehydrogenase B (NAD(+)), electron transfer subunit (262 aa).

In terms of domain architecture, FAD-binding FR-type spans 2-102; it reads SKVFDAKVLA…MGPLGRGFTL (101 aa). FAD is bound by residues 53–56, 70–72, and 77–78; these read RPIS, LFR, and GT. [2Fe-2S] cluster is bound by residues cysteine 224, cysteine 229, cysteine 232, and cysteine 248.

The protein belongs to the PyrK family. As to quaternary structure, heterotetramer of 2 PyrK and 2 PyrD type B subunits. However, the metal reductase complex seems to be composed of a heterooctamer of 4 PyrK and 4 PyrD subunits. FAD is required as a cofactor. The cofactor is [2Fe-2S] cluster.

It is found in the cytoplasm. The protein operates within pyrimidine metabolism; UMP biosynthesis via de novo pathway; orotate from (S)-dihydroorotate (NAD(+) route): step 1/1. Functionally, responsible for channeling the electrons from the oxidation of dihydroorotate from the FMN redox center in the PyrD type B subunit to the ultimate electron acceptor NAD(+). Its function is as follows. Together with PyrD, also forms a metal reductase complex able to reduce Fe(III)-chelates to Fe(II)-chelates, as well as soluble Cr(VI) and U(VI), using NADH as electron donor. To a lesser extent, can also use NADPH as an electron donor. Is unable to reduce riboflavin and FMN with NADH as electron donor. May have an in vivo role in metal reduction in D.reducens, which is an organism capable of reducing contaminant heavy metals and radionuclides. This is Dihydroorotate dehydrogenase B (NAD(+)), electron transfer subunit from Desulforamulus reducens (strain ATCC BAA-1160 / DSM 100696 / MI-1) (Desulfotomaculum reducens).